The chain runs to 695 residues: DNA topoisomerase 4 subunit B (695 aa).

Residues 1–53 (MSSSDKIPSLFGDDDALAPVPAAPFKASVEPRVEPTPRPIPPPPPSKTASAPG) are disordered. Positions 36-46 (TPRPIPPPPPS) are enriched in pro residues. Residues Tyr-55, Asn-95, Asp-122, 164-170 (GLHGVGA), and Lys-397 contribute to the ATP site. The Toprim domain occupies 477-591 (AELFIVEGDS…GGHLFLALPP (115 aa)). 3 residues coordinate Mg(2+): Glu-483, Asp-556, and Asp-558.

The protein belongs to the type II topoisomerase family. ParE type 1 subfamily. As to quaternary structure, heterotetramer composed of ParC and ParE. Mg(2+) serves as cofactor. The cofactor is Mn(2+). It depends on Ca(2+) as a cofactor.

It carries out the reaction ATP-dependent breakage, passage and rejoining of double-stranded DNA.. Topoisomerase IV is essential for chromosome segregation. It relaxes supercoiled DNA. Performs the decatenation events required during the replication of a circular DNA molecule. The sequence is that of DNA topoisomerase 4 subunit B from Caulobacter vibrioides (strain ATCC 19089 / CIP 103742 / CB 15) (Caulobacter crescentus).